We begin with the raw amino-acid sequence, 257 residues long: UPF0246 protein HAPS_0280 (257 aa).

The protein belongs to the UPF0246 family.

The protein is UPF0246 protein HAPS_0280 of Glaesserella parasuis serovar 5 (strain SH0165) (Haemophilus parasuis).